The following is a 113-amino-acid chain: U11-theraphotoxin-Hhn1a (113 aa).

The first 21 residues, 1-21 (MNTVRVTFLLVFVLAVSLGQT), serve as a signal peptide directing secretion. A propeptide spanning residues 22–74 (DKDENRMEMQEKTEQGKSYLDFAENLLLQKLEELEAKLLEEDSEESRNSRQKR) is cleaved from the precursor. Disulfide bonds link cysteine 75–cysteine 90, cysteine 82–cysteine 95, and cysteine 89–cysteine 110.

This sequence belongs to the neurotoxin 14 (magi-1) family. 01 (HNTX-16) subfamily. In terms of tissue distribution, expressed by the venom gland.

It is found in the secreted. In terms of biological role, probable ion channel inhibitor. This is U11-theraphotoxin-Hhn1a from Cyriopagopus hainanus (Chinese bird spider).